The sequence spans 128 residues: Large ribosomal subunit protein bL12 (128 aa).

This sequence belongs to the bacterial ribosomal protein bL12 family. Homodimer. Part of the ribosomal stalk of the 50S ribosomal subunit. Forms a multimeric L10(L12)X complex, where L10 forms an elongated spine to which 2 to 4 L12 dimers bind in a sequential fashion. Binds GTP-bound translation factors.

Its function is as follows. Forms part of the ribosomal stalk which helps the ribosome interact with GTP-bound translation factors. Is thus essential for accurate translation. The sequence is that of Large ribosomal subunit protein bL12 from Corynebacterium efficiens (strain DSM 44549 / YS-314 / AJ 12310 / JCM 11189 / NBRC 100395).